We begin with the raw amino-acid sequence, 206 residues long: MEHHQIYRHKKFDMGRKIEKCDLQLKEELISRSGTPCTSRSPFDAANQSVSLGFSDQDADFPPLPKRRRLGSSSSSVSYQSASPIITEAIQDIFKYHVNMVRKFPKKERSPKDQERRNKNTIACRMSRRKKKFDDLQIEQQYKECSDEHLKIAEQSLRARVYLNHLKQLVKQEDHPLVSSRRVPEENTKSNFSIDYLIGGIKQEHA.

The segment at 54-77 (FSDQDADFPPLPKRRRLGSSSSSV) is disordered.

Functionally, plays a role in inducing apoptosis and is involved in the repair of head patterning defects in the embryo caused by extra maternal copies of the homeotic gene bicoid. This Drosophila melanogaster (Fruit fly) protein is Protein Mabiki.